Consider the following 791-residue polypeptide: ATP-dependent 6-phosphofructokinase, platelet type (791 aa).

Met-1 is modified (N-acetylmethionine). Residues 1–399 form an N-terminal catalytic PFK domain 1 region; it reads MDNKVSASPR…NLNTYKRLAI (399 aa). A Phosphoserine modification is found at Ser-6. Position 12 is a phosphoserine; by PKA (Ser-12). Position 21 is a phosphoserine (Ser-21). ATP-binding positions include Gly-34, 97 to 98, and 127 to 130; these read RS and GSGS. Ser-142 is subject to Phosphoserine. Substrate is bound by residues 173–175, Arg-210, 217–219, Glu-273, Arg-301, and 307–310; these read SID, MGR, and HVQR. Residue Asp-175 is the Proton acceptor of the active site. Ser-386 carries the phosphoserine modification. Position 395 is an N6-acetyllysine (Lys-395). The interdomain linker stretch occupies residues 400–411; it reads KLPDDKIQKSNC. Residues 412–791 form a C-terminal regulatory PFK domain 2 region; that stretch reads NVAVINVGAP…RGGPEEPAAI (380 aa). A beta-D-fructose 2,6-bisphosphate-binding site is contributed by Arg-481. Lys-486 carries the N6-acetyllysine modification. Beta-D-fructose 2,6-bisphosphate-binding positions include 538–542, Arg-576, 583–585, and Glu-639; these read TVSNN and MGG. O-linked (GlcNAc) serine glycosylation is present at Ser-540. Tyr-651 carries the phosphotyrosine modification. Beta-D-fructose 2,6-bisphosphate-binding positions include Arg-665 and 671 to 674; that span reads HMQQ. Lys-688 is subject to N6-acetyllysine. Beta-D-fructose 2,6-bisphosphate is bound at residue Arg-744.

It belongs to the phosphofructokinase type A (PFKA) family. ATP-dependent PFK group I subfamily. Eukaryotic two domain clade 'E' sub-subfamily. As to quaternary structure, homo- and heterotetramers. Phosphofructokinase (PFK) enzyme functions as a tetramer composed of different combinations of 3 types of subunits, called PFKM (M), PFKL (L) and PFKP (P). The composition of the PFK tetramer differs according to the tissue type it is present in. The kinetic and regulatory properties of the tetrameric enzyme are dependent on the subunit composition, hence can vary across tissues. Interacts with ATG4B; promoting phosphorylation of ATG4B. Mg(2+) is required as a cofactor. In terms of processing, glcNAcylation decreases enzyme activity. Post-translationally, phosphorylation at Ser-386 promotes interaction with ATG4B.

The protein localises to the cytoplasm. It carries out the reaction beta-D-fructose 6-phosphate + ATP = beta-D-fructose 1,6-bisphosphate + ADP + H(+). It participates in carbohydrate degradation; glycolysis; D-glyceraldehyde 3-phosphate and glycerone phosphate from D-glucose: step 3/4. Its activity is regulated as follows. Allosterically activated by ADP, AMP, or fructose 2,6-bisphosphate, and allosterically inhibited by ATP or citrate. Catalyzes the phosphorylation of D-fructose 6-phosphate to fructose 1,6-bisphosphate by ATP, the first committing step of glycolysis. The chain is ATP-dependent 6-phosphofructokinase, platelet type (PFKP) from Oryctolagus cuniculus (Rabbit).